The following is a 212-amino-acid chain: 2,3-bisphosphoglycerate-dependent phosphoglycerate mutase (212 aa).

Residues 9–16, 22–23, arginine 61, 88–91, lysine 99, 115–116, and 159–160 each bind substrate; these read RHGQSEWN, TG, ERDY, RR, and GN. Catalysis depends on histidine 10, which acts as the Tele-phosphohistidine intermediate. Glutamate 88 acts as the Proton donor/acceptor in catalysis.

It belongs to the phosphoglycerate mutase family. BPG-dependent PGAM subfamily. Homodimer.

It catalyses the reaction (2R)-2-phosphoglycerate = (2R)-3-phosphoglycerate. Its pathway is carbohydrate degradation; glycolysis; pyruvate from D-glyceraldehyde 3-phosphate: step 3/5. Its function is as follows. Catalyzes the interconversion of 2-phosphoglycerate and 3-phosphoglycerate. In Methylorubrum extorquens (strain CM4 / NCIMB 13688) (Methylobacterium extorquens), this protein is 2,3-bisphosphoglycerate-dependent phosphoglycerate mutase.